The sequence spans 263 residues: Palmitoyltransferase ZDHHC22 (263 aa).

Topologically, residues 1-9 are cytoplasmic; the sequence is MLALRLLNV. Residues 10–30 traverse the membrane as a helical segment; that stretch reads VAPAYFLCISLVTFVLQLFLF. Residues 31–48 lie on the Lumenal side of the membrane; the sequence is LPSMREDPTATPLFSPAV. Residues 49-69 traverse the membrane as a helical segment; that stretch reads LHGALFLFLSANALGNYVLVI. Over 70–125 the chain is Cytoplasmic; that stretch reads QNSPDDLGTCQGTMSQRPQCPPPSTHFCRVCSRVTLRHDHHCFFTGNCIGSRNMRN. The region spanning 91–131 is the DHHC domain; it reads PPSTHFCRVCSRVTLRHDHHCFFTGNCIGSRNMRNFILFCL. Cysteine 111 serves as the catalytic S-palmitoyl cysteine intermediate. 2 consecutive transmembrane segments (helical) span residues 126–146 and 147–167; these read FILF…AGVA and YISA…TLLP. Residues 168 to 182 are Cytoplasmic-facing; the sequence is TSISQFFSGAVLGSD. A helical membrane pass occupies residues 183 to 203; it reads MFVILMLYLWFAVGLACAGFC. The Lumenal portion of the chain corresponds to 204–263; it reads CHQLLLILRGQTRYQVRKGMAVRARPWRKNLQEVFGKRWLLGLLVPMFNVGTESSKQQDK.

This sequence belongs to the DHHC palmitoyltransferase family. In terms of assembly, interacts with CNN3.

Its subcellular location is the endoplasmic reticulum membrane. It localises to the golgi apparatus membrane. The enzyme catalyses L-cysteinyl-[protein] + hexadecanoyl-CoA = S-hexadecanoyl-L-cysteinyl-[protein] + CoA. Functionally, palmitoyltransferase that could catalyze the addition of palmitate onto various protein substrates and be involved in a variety of cellular processes. Catalyzes the palmitoylation of KCNMA1, regulating localization of KCNMA1 to the plasma membrane. Might also mediate palmitoylation of CNN3. This is Palmitoyltransferase ZDHHC22 from Mus musculus (Mouse).